Here is a 335-residue protein sequence, read N- to C-terminus: Corrinoid adenosyltransferase PduO (335 aa).

Histidine 206 contacts heme.

Belongs to the Cob(I)alamin adenosyltransferase family. PduO subfamily. Forms a complex with PduS. The cofactor is heme b. Mg(2+) serves as cofactor.

It is found in the bacterial microcompartment. It catalyses the reaction cob(I)alamin-[corrinoid adenosyltransferase] + ATP = apo-[corrinoid adenosyltransferase] + adenosylcob(III)alamin + triphosphate. The protein operates within polyol metabolism; 1,2-propanediol degradation. It participates in cofactor biosynthesis; adenosylcobalamin biosynthesis. Functionally, converts cob(I)alamin to adenosylcobalamin (adenosylcob(III)alamin), the cofactor for propanediol dehydratase. Found in the bacterial microcompartment (BMC) dedicated to 1,2-propanediol (1,2-PD) degradation. PduS and PduO allow regeneration of the adenosylcobalamin cofactor within the BMC. In terms of biological role, expression of a cosmid containing the full 21-gene pdu operon in E.coli allows E.coli to grow on 1,2-propanediol (1,2-PD) with the appearance of bacterial microcompartments (BMC) in its cytoplasm. Its function is as follows. The 1,2-PD-specific bacterial microcompartment (BMC) concentrates low levels of 1,2-PD catabolic enzymes, concentrates volatile reaction intermediates thus enhancing pathway flux and keeps the level of toxic, mutagenic propionaldehyde low. The chain is Corrinoid adenosyltransferase PduO from Citrobacter freundii.